The primary structure comprises 127 residues: Glycine cleavage system H protein 1 (127 aa).

Residues 20-101 form the Lipoyl-binding domain; sequence LLTVGITAYA…LGEAWFFRFR (82 aa). Lys-60 bears the N6-lipoyllysine mark.

It belongs to the GcvH family. As to quaternary structure, the glycine cleavage system is composed of four proteins: P, T, L and H. The cofactor is (R)-lipoate.

Functionally, the glycine cleavage system catalyzes the degradation of glycine. The H protein shuttles the methylamine group of glycine from the P protein to the T protein. This Pseudomonas aeruginosa (strain ATCC 15692 / DSM 22644 / CIP 104116 / JCM 14847 / LMG 12228 / 1C / PRS 101 / PAO1) protein is Glycine cleavage system H protein 1.